The chain runs to 241 residues: MGHHLKRVVSPKSWGIPRKTDKFVTKTSPGPHNKNALPIVVWARDQMGIVRNMKEAKHVLREREIIVNGRPVRHPDMGIGIFDIVSIPKSGKHYRILRDKKGRHVTIPIDEDAASSRLVKITNKTIVKGGRIQLNLRDGSNVLTDKQYKSGDSIVLSLKEGQKNEIIDHFPFQPGNMAMIIGGKHSGVVGRIIEHIPVPGSLPNRVILKDESSGESFETIDEYVVMVGRESPAIDRWGIEE.

The S4 RNA-binding domain occupies Leu37–Lys100.

It belongs to the eukaryotic ribosomal protein eS4 family.

The chain is Small ribosomal subunit protein eS4 from Methanospirillum hungatei JF-1 (strain ATCC 27890 / DSM 864 / NBRC 100397 / JF-1).